The following is a 369-amino-acid chain: 4-hydroxy-3-methylbut-2-en-1-yl diphosphate synthase (flavodoxin) (369 aa).

Residues Cys270, Cys273, Cys305, and Glu312 each coordinate [4Fe-4S] cluster.

This sequence belongs to the IspG family. [4Fe-4S] cluster serves as cofactor.

It catalyses the reaction (2E)-4-hydroxy-3-methylbut-2-enyl diphosphate + oxidized [flavodoxin] + H2O + 2 H(+) = 2-C-methyl-D-erythritol 2,4-cyclic diphosphate + reduced [flavodoxin]. It participates in isoprenoid biosynthesis; isopentenyl diphosphate biosynthesis via DXP pathway; isopentenyl diphosphate from 1-deoxy-D-xylulose 5-phosphate: step 5/6. Its function is as follows. Converts 2C-methyl-D-erythritol 2,4-cyclodiphosphate (ME-2,4cPP) into 1-hydroxy-2-methyl-2-(E)-butenyl 4-diphosphate. The sequence is that of 4-hydroxy-3-methylbut-2-en-1-yl diphosphate synthase (flavodoxin) from Pseudomonas putida (strain W619).